Consider the following 139-residue polypeptide: Orientotoxin-2 (139 aa).

In terms of tissue distribution, expressed by the venom gland.

It is found in the secreted. It carries out the reaction a 1,2-diacyl-sn-glycero-3-phosphocholine + H2O = a 1-acyl-sn-glycero-3-phosphocholine + a fatty acid + H(+). Functionally, has a highly toxic phospholipase A2 activity. This Vespa orientalis (Oriental hornet) protein is Orientotoxin-2.